We begin with the raw amino-acid sequence, 506 residues long: Maturase K (506 aa).

Belongs to the intron maturase 2 family. MatK subfamily.

The protein resides in the plastid. It is found in the chloroplast. Functionally, usually encoded in the trnK tRNA gene intron. Probably assists in splicing its own and other chloroplast group II introns. The chain is Maturase K from Olea europaea (Common olive).